The chain runs to 241 residues: 3-dehydroquinate dehydratase (241 aa).

Residues 35 to 37 (ELR) and Arg70 each bind 3-dehydroquinate. His133 acts as the Proton donor/acceptor in catalysis. The active-site Schiff-base intermediate with substrate is Lys160. Arg202 and Gln225 together coordinate 3-dehydroquinate.

This sequence belongs to the type-I 3-dehydroquinase family. Homodimer.

It catalyses the reaction 3-dehydroquinate = 3-dehydroshikimate + H2O. Its pathway is metabolic intermediate biosynthesis; chorismate biosynthesis; chorismate from D-erythrose 4-phosphate and phosphoenolpyruvate: step 3/7. In terms of biological role, involved in the third step of the chorismate pathway, which leads to the biosynthesis of aromatic amino acids. Catalyzes the cis-dehydration of 3-dehydroquinate (DHQ) and introduces the first double bond of the aromatic ring to yield 3-dehydroshikimate. The chain is 3-dehydroquinate dehydratase from Staphylococcus haemolyticus (strain JCSC1435).